The chain runs to 145 residues: Protein SprT-like (145 aa).

A SprT-like domain is found at 4 to 141 (TDYVKEVSRQ…CGNCHGKLRH (138 aa)). Position 64 (histidine 64) interacts with Zn(2+). Residue glutamate 65 is part of the active site. Residue histidine 68 coordinates Zn(2+).

This sequence belongs to the SprT family. Zn(2+) is required as a cofactor.

It localises to the cytoplasm. The chain is Protein SprT-like from Streptococcus mutans serotype c (strain ATCC 700610 / UA159).